The primary structure comprises 229 residues: uncharacterized protein (229 aa).

The protein to T.pallidum TP_0315, TP_0618 and TP_0619.

This is an uncharacterized protein from Treponema pallidum (strain Nichols).